A 174-amino-acid chain; its full sequence is Regenerating islet-derived protein 3-alpha (174 aa).

The first 25 residues, Met-1 to Gly-25, serve as a signal peptide directing secretion. The propeptide occupies Glu-26–Arg-36. Disulfide bonds link Cys-39–Cys-50, Cys-67–Cys-170, and Cys-145–Cys-162. One can recognise a C-type lectin domain in the interval Tyr-46–Lys-171. The interval Trp-102 to Gly-117 is sufficient to activate EXTL3. Zn(2+)-binding residues include His-106 and Glu-120.

Forms a hexameric membrane-permeabilizing oligomeric pore on membrane phospholipids. The hexamer is formed by three dimers related by helical symmetry. Forms filaments, filamentation traps pore complexes and limits damage to host cells. Interacts with EXTL3. Proteolytic processing by trypsin removes an inhibitory N-terminal propeptide and is essential for peptidoglycan binding and antibacterial activity. Low expression found in healthy pancreas.

It localises to the secreted. Bactericidal C-type lectin. The lack of the EPN motif may explain its inability to bind peptidoglycan. Functionally, acts as a hormone in response to different stimuli like anti-inflammatory signals, such as IL17A, or gut microbiome. Secreted by different cell types to activate its receptor EXTL3 and induce cell specific signaling pathways. Induced by IL17A in keratinocytes, regulates keratinocyte proliferation and differentiation after skin injury via activation of EXTL3-PI3K-AKT signaling pathway. In parallel, inhibits skin inflammation through the inhibition of inflammatory cytokines such as IL6 and TNF. In pancreas, is able to permealize beta-cells membrane and stimulate their proliferation. The polypeptide is Regenerating islet-derived protein 3-alpha (Reg3a) (Rattus norvegicus (Rat)).